A 1181-amino-acid polypeptide reads, in one-letter code: DNA-directed RNA polymerase subunit beta' (1181 aa).

Zn(2+)-binding residues include Cys68, Cys70, Cys83, and Cys86. Mg(2+) contacts are provided by Asp457, Asp459, and Asp461. 4 residues coordinate Zn(2+): Cys802, Cys876, Cys883, and Cys886.

This sequence belongs to the RNA polymerase beta' chain family. As to quaternary structure, the RNAP catalytic core consists of 2 alpha, 1 beta, 1 beta' and 1 omega subunit. When a sigma factor is associated with the core the holoenzyme is formed, which can initiate transcription. Requires Mg(2+) as cofactor. It depends on Zn(2+) as a cofactor.

It carries out the reaction RNA(n) + a ribonucleoside 5'-triphosphate = RNA(n+1) + diphosphate. DNA-dependent RNA polymerase catalyzes the transcription of DNA into RNA using the four ribonucleoside triphosphates as substrates. The polypeptide is DNA-directed RNA polymerase subunit beta' (Syntrophomonas wolfei subsp. wolfei (strain DSM 2245B / Goettingen)).